Reading from the N-terminus, the 351-residue chain is Histidinol-phosphate aminotransferase 1 (351 aa).

The residue at position 210 (Lys210) is an N6-(pyridoxal phosphate)lysine.

It belongs to the class-II pyridoxal-phosphate-dependent aminotransferase family. Histidinol-phosphate aminotransferase subfamily. Homodimer. Requires pyridoxal 5'-phosphate as cofactor.

It carries out the reaction L-histidinol phosphate + 2-oxoglutarate = 3-(imidazol-4-yl)-2-oxopropyl phosphate + L-glutamate. The protein operates within amino-acid biosynthesis; L-histidine biosynthesis; L-histidine from 5-phospho-alpha-D-ribose 1-diphosphate: step 7/9. This chain is Histidinol-phosphate aminotransferase 1 (hisC1), found in Pasteurella multocida (strain Pm70).